The sequence spans 115 residues: Mediator of RNA polymerase II transcription subunit 11 (115 aa).

Residues 56–107 (YERLDKSTTQLRKEIQLLDENVGTRLLPINVNKKALGQDTEKMEEQLDLLSA) adopt a coiled-coil conformation.

The protein belongs to the mediator complex subunit 11 family. Component of the Mediator complex, which is composed of at least 21 subunits that form three structurally distinct submodules. The Mediator head module contains MED6, MED8, MED11, SRB4/MED17, SRB5/MED18, ROX3/MED19, SRB2/MED20 and SRB6/MED22, the middle module contains MED1, MED4, NUT1/MED5, MED7, CSE2/MED9, NUT2/MED10, SRB7/MED21 and SOH1/MED31, and the tail module contains MED2, PGD1/MED3, RGR1/MED14, GAL11/MED15 and SIN4/MED16. The head and the middle modules interact directly with RNA polymerase II, whereas the elongated tail module interacts with gene-specific regulatory proteins. MED11 forms a heterodimer with SRB6/MED22. The MED11/22 heterodimer binds to and stabilizes the central head subunit SRB4/MED17. Interacts with TFIIH subunit RAD3.

The protein resides in the nucleus. In terms of biological role, component of the Mediator complex, a coactivator involved in the regulated transcription of nearly all RNA polymerase II-dependent genes. Mediator functions as a bridge to convey information from gene-specific regulatory proteins to the basal RNA polymerase II transcription machinery. The Mediator complex, having a compact conformation in its free form, is recruited to promoters by direct interactions with regulatory proteins and serves for the assembly of a functional pre-initiation complex (PIC) with RNA polymerase II and the general transcription factors. The Mediator complex unfolds to an extended conformation and partially surrounds RNA polymerase II, specifically interacting with the unphosphorylated form of the C-terminal domain (CTD) of RNA polymerase II. The Mediator complex dissociates from the RNA polymerase II holoenzyme and stays at the promoter when transcriptional elongation begins. The essential MED11/22 heterodimer specifically functions in promoting stable PIC formation. In Saccharomyces cerevisiae (strain ATCC 204508 / S288c) (Baker's yeast), this protein is Mediator of RNA polymerase II transcription subunit 11 (MED11).